Here is a 91-residue protein sequence, read N- to C-terminus: Large ribosomal subunit protein eL43 (91 aa).

The segment at C39–C60 adopts a C4-type zinc-finger fold.

The protein belongs to the eukaryotic ribosomal protein eL43 family.

This chain is Large ribosomal subunit protein eL43 (rpl37A), found in Dictyostelium discoideum (Social amoeba).